The following is a 161-amino-acid chain: uncharacterized protein (161 aa).

Residues 16–36 traverse the membrane as a helical segment; it reads KLGLVVAIFFFMMGTTVVVLY.

The protein resides in the membrane. This is an uncharacterized protein from Encephalitozoon cuniculi (strain GB-M1) (Microsporidian parasite).